Consider the following 284-residue polypeptide: Nucleotide-binding protein Sden_0486 (284 aa).

Residue 8 to 15 (GRSGSGKS) coordinates ATP. A GTP-binding site is contributed by 56–59 (DVRN).

The protein belongs to the RapZ-like family.

In terms of biological role, displays ATPase and GTPase activities. This Shewanella denitrificans (strain OS217 / ATCC BAA-1090 / DSM 15013) protein is Nucleotide-binding protein Sden_0486.